The following is a 214-amino-acid chain: Phosphoenolpyruvate guanylyltransferase (214 aa).

Residues T148, G163, and S166 each contribute to the phosphoenolpyruvate site.

Belongs to the CofC family.

The enzyme catalyses phosphoenolpyruvate + GTP + H(+) = enolpyruvoyl-2-diphospho-5'-guanosine + diphosphate. The protein operates within cofactor biosynthesis; coenzyme F420 biosynthesis. Guanylyltransferase that catalyzes the activation of phosphoenolpyruvate (PEP) as enolpyruvoyl-2-diphospho-5'-guanosine, via the condensation of PEP with GTP. It is involved in the biosynthesis of coenzyme F420, a hydride carrier cofactor. The chain is Phosphoenolpyruvate guanylyltransferase from Mycobacterium tuberculosis (strain KZN 1435 / MDR).